The following is a 425-amino-acid chain: Glucose-6-phosphate 1-dehydrogenase (425 aa).

NADP(+) contacts are provided by R44 and K135. H165, K169, E201, and D220 together coordinate substrate. The active-site Proton acceptor is H225. Residue K311 participates in substrate binding.

Belongs to the glucose-6-phosphate dehydrogenase family.

It carries out the reaction D-glucose 6-phosphate + NADP(+) = 6-phospho-D-glucono-1,5-lactone + NADPH + H(+). It functions in the pathway carbohydrate degradation; pentose phosphate pathway; D-ribulose 5-phosphate from D-glucose 6-phosphate (oxidative stage): step 1/3. Functionally, catalyzes the oxidation of glucose 6-phosphate to 6-phosphogluconolactone. The protein is Glucose-6-phosphate 1-dehydrogenase of Helicobacter pylori (strain ATCC 700392 / 26695) (Campylobacter pylori).